Here is a 158-residue protein sequence, read N- to C-terminus: Crossover junction endodeoxyribonuclease RuvC (158 aa).

Residues D7, E66, and D139 contribute to the active site. Mg(2+) is bound by residues D7, E66, and D139.

This sequence belongs to the RuvC family. In terms of assembly, homodimer which binds Holliday junction (HJ) DNA. The HJ becomes 2-fold symmetrical on binding to RuvC with unstacked arms; it has a different conformation from HJ DNA in complex with RuvA. In the full resolvosome a probable DNA-RuvA(4)-RuvB(12)-RuvC(2) complex forms which resolves the HJ. Mg(2+) is required as a cofactor.

The protein localises to the cytoplasm. It catalyses the reaction Endonucleolytic cleavage at a junction such as a reciprocal single-stranded crossover between two homologous DNA duplexes (Holliday junction).. The RuvA-RuvB-RuvC complex processes Holliday junction (HJ) DNA during genetic recombination and DNA repair. Endonuclease that resolves HJ intermediates. Cleaves cruciform DNA by making single-stranded nicks across the HJ at symmetrical positions within the homologous arms, yielding a 5'-phosphate and a 3'-hydroxyl group; requires a central core of homology in the junction. The consensus cleavage sequence is 5'-(A/T)TT(C/G)-3'. Cleavage occurs on the 3'-side of the TT dinucleotide at the point of strand exchange. HJ branch migration catalyzed by RuvA-RuvB allows RuvC to scan DNA until it finds its consensus sequence, where it cleaves and resolves the cruciform DNA. In Campylobacter hominis (strain ATCC BAA-381 / DSM 21671 / CCUG 45161 / LMG 19568 / NCTC 13146 / CH001A), this protein is Crossover junction endodeoxyribonuclease RuvC.